Here is a 21-residue protein sequence, read N- to C-terminus: Phenol-soluble modulin alpha 1 peptide (21 aa).

Belongs to the phenol-soluble modulin alpha peptides family.

Its function is as follows. Peptide which can recruit, activate and subsequently lyse human neutrophils, thus eliminating the main cellular defense against infection. The chain is Phenol-soluble modulin alpha 1 peptide (psmA1) from Staphylococcus aureus (strain Mu3 / ATCC 700698).